We begin with the raw amino-acid sequence, 38 residues long: Photosystem II reaction center protein X (38 aa).

Residues 9-29 form a helical membrane-spanning segment; the sequence is IASLFAGAFIALAIGGVLVFI.

The protein belongs to the PsbX family. Type 1 subfamily. PSII is composed of 1 copy each of membrane proteins PsbA, PsbB, PsbC, PsbD, PsbE, PsbF, PsbH, PsbI, PsbJ, PsbK, PsbL, PsbM, PsbT, PsbX, PsbY, PsbZ, Psb30/Ycf12, at least 3 peripheral proteins of the oxygen-evolving complex and a large number of cofactors. It forms dimeric complexes.

The protein localises to the plastid. It localises to the chloroplast thylakoid membrane. Involved in the binding and/or turnover of quinones at the Q(B) site of photosystem II (PSII). PSII is a light-driven water plastoquinone oxidoreductase, using light energy to abstract electrons from H(2)O, generating a proton gradient subsequently used for ATP formation. The polypeptide is Photosystem II reaction center protein X (Phaeodactylum tricornutum (strain CCAP 1055/1)).